A 591-amino-acid chain; its full sequence is DEAD-box ATP-dependent RNA helicase 30 (591 aa).

The interval 1 to 109 (MSSYDRRFAD…GRGGSSKREL (109 aa)) is disordered. Gly residues predominate over residues 72 to 103 (FSVGRGGGRGGYGQYGDRNGGGNWGGGGGRGG). A Q motif motif is present at residues 165–193 (KMFQDANFPDNILEAIAKLGFTEPTPIQA). Residues 196–371 (WPMALKGRDL…RQFLRDPYKA (176 aa)) enclose the Helicase ATP-binding domain. 209 to 216 (AETGSGKT) is an ATP binding site. The short motif at 319-322 (DEAD) is the DEAD box element. The Helicase C-terminal domain occupies 399-544 (RLLTLLKQLM…VVPPTLSALV (146 aa)). The interval 547–591 (SGSGYGGSGGGRNFRPRGGGRGGGFGDKRSRSTSNFVPHGGKRTW) is disordered. A compositionally biased stretch (gly residues) spans 549-571 (SGYGGSGGGRNFRPRGGGRGGGF).

Belongs to the DEAD box helicase family. DDX5/DBP2 subfamily.

It localises to the nucleus. The enzyme catalyses ATP + H2O = ADP + phosphate + H(+). Functionally, ATP-dependent RNA helicase involved nonsense-mediated mRNA decay and ribosome biogenesis through rRNA processing. The chain is DEAD-box ATP-dependent RNA helicase 30 (RH30) from Arabidopsis thaliana (Mouse-ear cress).